The sequence spans 74 residues: Protein SlyX homolog (74 aa).

The protein belongs to the SlyX family.

The protein is Protein SlyX homolog of Neisseria meningitidis serogroup A / serotype 4A (strain DSM 15465 / Z2491).